A 314-amino-acid polypeptide reads, in one-letter code: uncharacterized protein (314 aa).

The tract at residues 1-70 is disordered; that stretch reads MAGNSQRRGA…QGRHKKTDDT (70 aa). The span at 43–65 shows a compositional bias: basic residues; sequence QRPHHPAGKRAAKAARQAQGRHK. Positions 265, 285, and 294 each coordinate S-adenosyl-L-methionine.

The protein belongs to the class IV-like SAM-binding methyltransferase superfamily. RNA methyltransferase TrmH family.

This is an uncharacterized protein from Mycolicibacterium vanbaalenii (strain DSM 7251 / JCM 13017 / BCRC 16820 / KCTC 9966 / NRRL B-24157 / PYR-1) (Mycobacterium vanbaalenii).